A 90-amino-acid chain; its full sequence is Phosphoribosyl-ATP pyrophosphatase (90 aa).

It belongs to the PRA-PH family.

The protein resides in the cytoplasm. The catalysed reaction is 1-(5-phospho-beta-D-ribosyl)-ATP + H2O = 1-(5-phospho-beta-D-ribosyl)-5'-AMP + diphosphate + H(+). The protein operates within amino-acid biosynthesis; L-histidine biosynthesis; L-histidine from 5-phospho-alpha-D-ribose 1-diphosphate: step 2/9. The sequence is that of Phosphoribosyl-ATP pyrophosphatase from Streptomyces avermitilis (strain ATCC 31267 / DSM 46492 / JCM 5070 / NBRC 14893 / NCIMB 12804 / NRRL 8165 / MA-4680).